Here is a 163-residue protein sequence, read N- to C-terminus: UPF0587 protein CG4646 (163 aa).

Residues cysteine 33, cysteine 36, cysteine 68, and cysteine 71 each contribute to the Zn(2+) site.

Belongs to the UPF0587 family.

This chain is UPF0587 protein CG4646, found in Drosophila melanogaster (Fruit fly).